The primary structure comprises 100 residues: MIGLSHYLIVSALIFSIGLMGVLRRRNLLMLFFATEVMLNAVNIAFAAISHYYNDLTGQMFAFFIIAIAASEVAVGLGILIVLYKRYGSLDLDDLASMKG.

Transmembrane regions (helical) follow at residues 2 to 22 (IGLS…LMGV), 29 to 49 (LMLF…FAAI), and 63 to 83 (FFII…LIVL).

Belongs to the complex I subunit 4L family. As to quaternary structure, NDH-1 is composed of 14 different subunits. Subunits NuoA, H, J, K, L, M, N constitute the membrane sector of the complex.

It localises to the cell inner membrane. It carries out the reaction a quinone + NADH + 5 H(+)(in) = a quinol + NAD(+) + 4 H(+)(out). Its function is as follows. NDH-1 shuttles electrons from NADH, via FMN and iron-sulfur (Fe-S) centers, to quinones in the respiratory chain. The immediate electron acceptor for the enzyme in this species is believed to be ubiquinone. Couples the redox reaction to proton translocation (for every two electrons transferred, four hydrogen ions are translocated across the cytoplasmic membrane), and thus conserves the redox energy in a proton gradient. The chain is NADH-quinone oxidoreductase subunit K from Sulfurovum sp. (strain NBC37-1).